The sequence spans 303 residues: Probable porphobilinogen deaminase (303 aa).

Cys-233 carries the S-(dipyrrolylmethanemethyl)cysteine modification.

It belongs to the HMBS family. Dipyrromethane is required as a cofactor.

It carries out the reaction 4 porphobilinogen + H2O = hydroxymethylbilane + 4 NH4(+). Its pathway is porphyrin-containing compound metabolism; protoporphyrin-IX biosynthesis; coproporphyrinogen-III from 5-aminolevulinate: step 2/4. Tetrapolymerization of the monopyrrole PBG into the hydroxymethylbilane pre-uroporphyrinogen in several discrete steps. This is Probable porphobilinogen deaminase from Methanocella arvoryzae (strain DSM 22066 / NBRC 105507 / MRE50).